A 537-amino-acid polypeptide reads, in one-letter code: MTKYIFVTGGVVSSIGKGIVAASLGRLLKNRGLKVTIQKFDPYINIDPGTMSPYQHGEVYVTDDGAETDLDLGHYERFIDINLNKYSNVTTGKIYSEVLRKERKGEYLGATVQVIPHITDALKEKIKRAATTTDSDVIITEVGGTVGDIESLPFLEALRQMKADVGSENVMYIHTTLLPYLKAAGEMKTKPTQHSVKELRGLGIQPNMLVIRTEEPVEQGIKNKLAQFCDVNPEAVIESRDVEHLYQIPLNLQAQSMDQIVCDHLKLDVPQADMTEWSAMVDRVMNLKKTTRIALVGKYVELPDAYLSVVEALKHSGYANDTAIELDWINANDLTAENAKKLLGQADGIIVPGGFGQRGTEGKIQAIRYAREHDVPMLGICLGMQLTCVEFARHVLGMEKANSFELDPDTAYPIIDIMRDQIDIEDMGGTLRLGLYPCKLKAGSRAAAAYNNQEVVQRRHRHRYEFNNKFRQDFEAAGFVFSGVSPDNRLVEIVELPEKKFFVAAQYHPELQSRPNRPEELYTAFVTAAVKNKNQSL.

Residues 1 to 267 form an amidoligase domain region; that stretch reads MTKYIFVTGG…DQIVCDHLKL (267 aa). Ser13 is a binding site for CTP. Residue Ser13 participates in UTP binding. 14 to 19 lines the ATP pocket; the sequence is SIGKGI. Residue Tyr54 coordinates L-glutamine. Asp71 lines the ATP pocket. Positions 71 and 141 each coordinate Mg(2+). CTP is bound by residues 148–150, 188–193, and Lys224; these read DIE and KTKPTQ. Residues 188-193 and Lys224 each bind UTP; that span reads KTKPTQ. 240–242 provides a ligand contact to ATP; that stretch reads RDV. The Glutamine amidotransferase type-1 domain maps to 292–535; it reads RIALVGKYVE…VTAAVKNKNQ (244 aa). Position 354 (Gly354) interacts with L-glutamine. Cys381 acts as the Nucleophile; for glutamine hydrolysis in catalysis. Residues 382–385, Glu405, and Arg463 each bind L-glutamine; that span reads LGMQ. Catalysis depends on residues His508 and Glu510.

This sequence belongs to the CTP synthase family. In terms of assembly, homotetramer.

The enzyme catalyses UTP + L-glutamine + ATP + H2O = CTP + L-glutamate + ADP + phosphate + 2 H(+). It catalyses the reaction L-glutamine + H2O = L-glutamate + NH4(+). The catalysed reaction is UTP + NH4(+) + ATP = CTP + ADP + phosphate + 2 H(+). The protein operates within pyrimidine metabolism; CTP biosynthesis via de novo pathway; CTP from UDP: step 2/2. Its activity is regulated as follows. Allosterically activated by GTP, when glutamine is the substrate; GTP has no effect on the reaction when ammonia is the substrate. The allosteric effector GTP functions by stabilizing the protein conformation that binds the tetrahedral intermediate(s) formed during glutamine hydrolysis. Inhibited by the product CTP, via allosteric rather than competitive inhibition. Functionally, catalyzes the ATP-dependent amination of UTP to CTP with either L-glutamine or ammonia as the source of nitrogen. Regulates intracellular CTP levels through interactions with the four ribonucleotide triphosphates. The polypeptide is CTP synthase (Streptococcus equi subsp. equi (strain 4047)).